The chain runs to 288 residues: 4-diphosphocytidyl-2-C-methyl-D-erythritol kinase (288 aa).

Lys-8 is an active-site residue. 90 to 100 is a binding site for ATP; sequence PVGAGLAGGSS. The active site involves Asp-132.

This sequence belongs to the GHMP kinase family. IspE subfamily.

The catalysed reaction is 4-CDP-2-C-methyl-D-erythritol + ATP = 4-CDP-2-C-methyl-D-erythritol 2-phosphate + ADP + H(+). It participates in isoprenoid biosynthesis; isopentenyl diphosphate biosynthesis via DXP pathway; isopentenyl diphosphate from 1-deoxy-D-xylulose 5-phosphate: step 3/6. Its function is as follows. Catalyzes the phosphorylation of the position 2 hydroxy group of 4-diphosphocytidyl-2C-methyl-D-erythritol. The chain is 4-diphosphocytidyl-2-C-methyl-D-erythritol kinase from Chlamydia trachomatis serovar A (strain ATCC VR-571B / DSM 19440 / HAR-13).